The chain runs to 30 residues: Cytochrome c3, 50 kDa (30 aa).

As to quaternary structure, monomer. In terms of processing, binds 4 heme groups per subunit.

Its subcellular location is the periplasm. Functionally, participates in sulfate respiration coupled with phosphorylation by transferring electrons from the enzyme dehydrogenase to ferredoxin. The polypeptide is Cytochrome c3, 50 kDa (Desulfuromonas acetoxidans (Chloropseudomonas ethylica)).